We begin with the raw amino-acid sequence, 173 residues long: MTTLSIYHRPHITQPIQQLTAFNDIASLLASAGIQLEHWQAEAPPLNASSETILTQYHADIERLKQQEGYTSADVISLTPNHAERKALREKFLQEHTHSEDEVRFFVRGSGAFFVPIGEQVFQLTCEAGDLLRVPANTPHWFDCGEFPDFVAIRIFTNPEGWVGHFTGRETFH.

H96, H98, E102, and H140 together coordinate Fe(2+). Ni(2+) is bound by residues H96, H98, E102, and H140.

This sequence belongs to the acireductone dioxygenase (ARD) family. Monomer. Fe(2+) is required as a cofactor. The cofactor is Ni(2+).

It catalyses the reaction 1,2-dihydroxy-5-(methylsulfanyl)pent-1-en-3-one + O2 = 3-(methylsulfanyl)propanoate + CO + formate + 2 H(+). It carries out the reaction 1,2-dihydroxy-5-(methylsulfanyl)pent-1-en-3-one + O2 = 4-methylsulfanyl-2-oxobutanoate + formate + 2 H(+). Its pathway is amino-acid biosynthesis; L-methionine biosynthesis via salvage pathway; L-methionine from S-methyl-5-thio-alpha-D-ribose 1-phosphate: step 5/6. In terms of biological role, catalyzes 2 different reactions between oxygen and the acireductone 1,2-dihydroxy-3-keto-5-methylthiopentene (DHK-MTPene) depending upon the metal bound in the active site. Fe-containing acireductone dioxygenase (Fe-ARD) produces formate and 2-keto-4-methylthiobutyrate (KMTB), the alpha-ketoacid precursor of methionine in the methionine recycle pathway. Ni-containing acireductone dioxygenase (Ni-ARD) produces methylthiopropionate, carbon monoxide and formate, and does not lie on the methionine recycle pathway. The protein is Acireductone dioxygenase 1 of Pectobacterium atrosepticum (strain SCRI 1043 / ATCC BAA-672) (Erwinia carotovora subsp. atroseptica).